Consider the following 447-residue polypeptide: UDP-N-acetylglucosamine 1-carboxyvinyltransferase (447 aa).

A phosphoenolpyruvate-binding site is contributed by 27–28 (KN). Arg97 provides a ligand contact to UDP-N-acetyl-alpha-D-glucosamine. Cys121 serves as the catalytic Proton donor. The residue at position 121 (Cys121) is a 2-(S-cysteinyl)pyruvic acid O-phosphothioketal. UDP-N-acetyl-alpha-D-glucosamine-binding positions include 126–130 (RPVDL), Asp314, and Val336.

Belongs to the EPSP synthase family. MurA subfamily.

It localises to the cytoplasm. It catalyses the reaction phosphoenolpyruvate + UDP-N-acetyl-alpha-D-glucosamine = UDP-N-acetyl-3-O-(1-carboxyvinyl)-alpha-D-glucosamine + phosphate. The protein operates within cell wall biogenesis; peptidoglycan biosynthesis. In terms of biological role, cell wall formation. Adds enolpyruvyl to UDP-N-acetylglucosamine. This chain is UDP-N-acetylglucosamine 1-carboxyvinyltransferase, found in Nostoc sp. (strain PCC 7120 / SAG 25.82 / UTEX 2576).